The following is a 177-amino-acid chain: Adenine phosphoribosyltransferase (177 aa).

This sequence belongs to the purine/pyrimidine phosphoribosyltransferase family. In terms of assembly, homodimer.

It localises to the cytoplasm. It carries out the reaction AMP + diphosphate = 5-phospho-alpha-D-ribose 1-diphosphate + adenine. It functions in the pathway purine metabolism; AMP biosynthesis via salvage pathway; AMP from adenine: step 1/1. In terms of biological role, catalyzes a salvage reaction resulting in the formation of AMP, that is energically less costly than de novo synthesis. The protein is Adenine phosphoribosyltransferase of Rhodococcus opacus (strain B4).